We begin with the raw amino-acid sequence, 361 residues long: Chorismate synthase (361 aa).

R48 and R54 together coordinate NADP(+). FMN is bound by residues 125 to 127, 238 to 239, G278, 293 to 297, and R319; these read RSS, NA, and KPTSS.

The protein belongs to the chorismate synthase family. As to quaternary structure, homotetramer. It depends on FMNH2 as a cofactor.

It carries out the reaction 5-O-(1-carboxyvinyl)-3-phosphoshikimate = chorismate + phosphate. Its pathway is metabolic intermediate biosynthesis; chorismate biosynthesis; chorismate from D-erythrose 4-phosphate and phosphoenolpyruvate: step 7/7. Its function is as follows. Catalyzes the anti-1,4-elimination of the C-3 phosphate and the C-6 proR hydrogen from 5-enolpyruvylshikimate-3-phosphate (EPSP) to yield chorismate, which is the branch point compound that serves as the starting substrate for the three terminal pathways of aromatic amino acid biosynthesis. This reaction introduces a second double bond into the aromatic ring system. This Escherichia coli (strain K12 / MC4100 / BW2952) protein is Chorismate synthase.